The following is a 307-amino-acid chain: Phosphonates import ATP-binding protein PhnC (307 aa).

Residues 4–252 enclose the ABC transporter domain; it reads IRIERLSKTF…RLHALYGDDA (249 aa). Residue 37–44 participates in ATP binding; that stretch reads GASGSGKS. The span at 265-275 shows a compositional bias: basic and acidic residues; it reads AAREAAGEPAR. The disordered stretch occupies residues 265 to 307; that stretch reads AAREAAGEPARRAPAAFDSAGSPDLPDSQPASPRRMLAASSMR.

Belongs to the ABC transporter superfamily. Phosphonates importer (TC 3.A.1.9.1) family. As to quaternary structure, the complex is composed of two ATP-binding proteins (PhnC), two transmembrane proteins (PhnE) and a solute-binding protein (PhnD).

The protein resides in the cell inner membrane. It catalyses the reaction phosphonate(out) + ATP + H2O = phosphonate(in) + ADP + phosphate + H(+). Part of the ABC transporter complex PhnCDE involved in phosphonates import. Responsible for energy coupling to the transport system. The protein is Phosphonates import ATP-binding protein PhnC of Burkholderia pseudomallei (strain 1710b).